The following is a 451-amino-acid chain: Gamma-aminobutyric acid receptor subunit alpha-2 (451 aa).

Positions 1 to 28 (MKTKLNIYNMQFLLFVFLVWDPARLVLA) are cleaved as a signal peptide. Residues 29–249 (NIQEDEAKNN…MTAHFHLKRK (221 aa)) are Extracellular-facing. The N-linked (GlcNAc...) asparagine glycan is linked to Asn38. Arg94 serves as a coordination point for 4-aminobutanoate. Residue Asn138 is glycosylated (N-linked (GlcNAc...) asparagine). Position 157 (Thr157) interacts with 4-aminobutanoate. Cys166 and Cys180 are disulfide-bonded. A helical transmembrane segment spans residues 250 to 270 (IGYFVIQTYLPCIMTVILSQV). Over 271 to 280 (SFWLNRESVP) the chain is Cytoplasmic. Residues 281-300 (ARTVFGVTTVLTMTTLSISA) form a helical membrane-spanning segment. The Extracellular segment spans residues 301 to 311 (RNSLPKVAYAT). A helical membrane pass occupies residues 312–332 (AMDWFIAVCYAFVFSALIEFA). The Cytoplasmic segment spans residues 333–420 (TVNYFTKRGW…FNSVSKIDRM (88 aa)). A helical membrane pass occupies residues 421-441 (SRIVFPVLFGTFNLVYWATYL). Residues 442–451 (NREPVLGVSP) lie on the Extracellular side of the membrane.

It belongs to the ligand-gated ion channel (TC 1.A.9) family. Gamma-aminobutyric acid receptor (TC 1.A.9.5) subfamily. GABRA2 sub-subfamily. In terms of assembly, heteropentamer, formed by a combination of alpha (GABRA1-6), beta (GABRB1-3), gamma (GABRG1-3), delta (GABRD), epsilon (GABRE), rho (GABRR1-3), pi (GABRP) and theta (GABRQ) subunits, each subunit exhibiting distinct physiological and pharmacological properties. Interacts with UBQLN1. Interacts with KIF21B. Interacts with LHFPL4. Interacts with SHISA7; interaction leads to the regulation of GABA(A) receptor trafficking, channel deactivation kinetics and pharmacology. Post-translationally, glycosylated.

It localises to the postsynaptic cell membrane. The protein localises to the cell membrane. It is found in the cytoplasmic vesicle membrane. Its subcellular location is the cell projection. The protein resides in the dendrite. It carries out the reaction chloride(in) = chloride(out). Activated by pentobarbital. Inhibited by the antagonist bicuculline. In terms of biological role, alpha subunit of the heteropentameric ligand-gated chloride channel gated by gamma-aminobutyric acid (GABA), a major inhibitory neurotransmitter in the brain. GABA-gated chloride channels, also named GABA(A) receptors (GABAAR), consist of five subunits arranged around a central pore and contain GABA active binding site(s) located at the alpha and beta subunit interfaces. When activated by GABA, GABAARs selectively allow the flow of chloride anions across the cell membrane down their electrochemical gradient. Chloride influx into the postsynaptic neuron following GABAAR opening decreases the neuron ability to generate a new action potential, thereby reducing nerve transmission. The alpha-2 subunit exhibits synaptogenic activity together with beta-2 and very little to no activity together with beta-3, the gamma-2 subunit being necessary but not sufficient to induce rapid synaptic contacts formation. The sequence is that of Gamma-aminobutyric acid receptor subunit alpha-2 from Homo sapiens (Human).